Reading from the N-terminus, the 105-residue chain is UPF0060 membrane protein Reut_B3679 (105 aa).

The next 4 membrane-spanning stretches (helical) occupy residues 4 to 24 (IALY…PYLW), 28 to 48 (GASA…AWLL), 60 to 80 (AAYG…VDGV), and 82 to 102 (PSAW…IIVF).

The protein belongs to the UPF0060 family.

It localises to the cell inner membrane. The protein is UPF0060 membrane protein Reut_B3679 of Cupriavidus pinatubonensis (strain JMP 134 / LMG 1197) (Cupriavidus necator (strain JMP 134)).